A 590-amino-acid polypeptide reads, in one-letter code: Synaptotagmin-3 (590 aa).

Topologically, residues 1–54 (MSGDYEDDLCRRALILVSDLCARVRDADTNDRCQEFNDRIRGYPRGPDADISVS) are vesicular. The tract at residues 10 to 34 (CRRALILVSDLCARVRDADTNDRCQ) is cysteine motif. Residues 55–75 (LLSVIVTFCGIVLLGVSLFVS) traverse the membrane as a helical segment. Over 76-590 (WKLCWVPWRD…KGLSEKENSE (515 aa)) the chain is Cytoplasmic. Disordered regions lie at residues 143 to 220 (AELL…VTSL), 234 to 260 (TQQTLTSQPDPSSEERPPALPLPLPGG), and 273 to 295 (ELYQGTGPGGRRSGGGPGSGEAG). The segment covering 185-203 (SPELPSEGGAGSGLLLLPP) has biased composition (low complexity). A compositionally biased stretch (polar residues) spans 234–243 (TQQTLTSQPD). A compositionally biased stretch (gly residues) spans 278-295 (TGPGGRRSGGGPGSGEAG). Residue R284 is modified to Omega-N-methylarginine. 2 consecutive C2 domains span residues 299–420 (PCGR…PLWR) and 431–565 (DLGE…EHWH). Ca(2+) is bound by residues D330, D336, D388, F389, D390, S393, D396, D462, D468, D522, and D524.

The protein belongs to the synaptotagmin family. As to quaternary structure, homodimer; disulfide-linked via the cysteine motif. Can also form heterodimers with SYT6, SYT9 and SYT10. Ca(2+) serves as cofactor. As to expression, expressed in melanocytes.

The protein localises to the cell membrane. The protein resides in the cytoplasmic vesicle. Its subcellular location is the secretory vesicle membrane. Ca(2+) sensor involved in Ca(2+)-dependent exocytosis of secretory vesicles through Ca(2+) and phospholipid binding to the C2 domain. Ca(2+) induces binding of the C2-domains to phospholipid membranes and to assembled SNARE-complexes; both actions contribute to triggering exocytosis. Plays a role in dendrite formation by melanocytes. The chain is Synaptotagmin-3 (SYT3) from Homo sapiens (Human).